Consider the following 159-residue polypeptide: Dihydrofolate reductase (159 aa).

The 156-residue stretch at 2–157 (TLSILVAHDL…IPHTFLHLIR (156 aa)) folds into the DHFR domain. 6-8 (LVA) provides a ligand contact to substrate. NADP(+) is bound by residues 7-8 (VA) and 15-20 (IGFENQ). Asp-28 is a binding site for substrate. Position 44 to 47 (44 to 47 (GRKT)) interacts with NADP(+). Arg-58 serves as a coordination point for substrate. Residues 63-66 (LTSD) and 93-98 (FGGQTL) each bind NADP(+). Substrate is bound at residue Thr-112.

The protein belongs to the dihydrofolate reductase family.

The catalysed reaction is (6S)-5,6,7,8-tetrahydrofolate + NADP(+) = 7,8-dihydrofolate + NADPH + H(+). It participates in cofactor biosynthesis; tetrahydrofolate biosynthesis; 5,6,7,8-tetrahydrofolate from 7,8-dihydrofolate: step 1/1. Key enzyme in folate metabolism. Catalyzes an essential reaction for de novo glycine and purine synthesis, and for DNA precursor synthesis. The protein is Dihydrofolate reductase (folA) of Staphylococcus aureus (strain COL).